The following is a 209-amino-acid chain: Probable nicotinate-nucleotide adenylyltransferase (209 aa).

Belongs to the NadD family.

The enzyme catalyses nicotinate beta-D-ribonucleotide + ATP + H(+) = deamido-NAD(+) + diphosphate. Its pathway is cofactor biosynthesis; NAD(+) biosynthesis; deamido-NAD(+) from nicotinate D-ribonucleotide: step 1/1. Catalyzes the reversible adenylation of nicotinate mononucleotide (NaMN) to nicotinic acid adenine dinucleotide (NaAD). This chain is Probable nicotinate-nucleotide adenylyltransferase, found in Hydrogenovibrio crunogenus (strain DSM 25203 / XCL-2) (Thiomicrospira crunogena).